Here is a 323-residue protein sequence, read N- to C-terminus: Zinc finger protein 784 (323 aa).

Positions 1–26 are disordered; that stretch reads MAAARPEAQSRSSPTPESRSQEPLDL. Over residues 9–18 the composition is skewed to polar residues; sequence QSRSSPTPES. Residue S13 is modified to Phosphoserine. C2H2-type zinc fingers lie at residues 65 to 87, 101 to 123, 129 to 151, 196 to 218, 224 to 246, and 252 to 274; these read FHCALCPAAFRLVSELLFHEHGH, SRCHVCGHSCPGPASLRAHYSLH, YRCALCPRAFKALAPLLRHQHRH, FACRFCAKPFRRSSDMRDHERVH, YHCGICGKGFTQSSVLSGHARIH, and FRCTLCDRTFNNSSNFRKHQRTH. The segment at 269 to 323 is disordered; that stretch reads KHQRTHFHGPGPGLGDSGGQLGSSAAEGSGSGCGVGDPAEEGRGETAKVKVEADQ. Residues 278–289 are compositionally biased toward gly residues; that stretch reads PGPGLGDSGGQL. A compositionally biased stretch (basic and acidic residues) spans 308–323; it reads EEGRGETAKVKVEADQ. K318 participates in a covalent cross-link: Glycyl lysine isopeptide (Lys-Gly) (interchain with G-Cter in SUMO2).

It belongs to the krueppel C2H2-type zinc-finger protein family.

The protein resides in the nucleus. Its function is as follows. May be involved in transcriptional regulation. The sequence is that of Zinc finger protein 784 (ZNF784) from Homo sapiens (Human).